Consider the following 148-residue polypeptide: MASKRILKELKDLQKDPPTSCSAGPVAEDMFHWQATIMGPSDSPYSGGVFLVTIHFPPDYPFKPPKVAFRTKVFHPNINSNGSICLDILKEQWSPALTISKVLLSICSLLTDPNPDDPLVPEIAHMYKTDKNKYESTARTWTQKYAMG.

Positions 1-147 constitute a UBC core domain; that stretch reads MASKRILKEL…ARTWTQKYAM (147 aa). Catalysis depends on C85, which acts as the Glycyl thioester intermediate.

Belongs to the ubiquitin-conjugating enzyme family. Interacts with CHIP. In terms of tissue distribution, highest expression in young stems and old leaves. Lowest levels in floral buds, anthers and young leaves.

It functions in the pathway protein modification; protein sumoylation. Accepts the ubiquitin-like protein SUMO/SMT3 from the E1 complex and catalyzes its covalent attachment to other proteins. Mediates the selective degradation of short-lived and abnormal proteins. This Arabidopsis thaliana (Mouse-ear cress) protein is SUMO-conjugating enzyme UBC9 (UBC9).